The sequence spans 202 residues: Small ribosomal subunit protein uS4c (202 aa).

The S4 RNA-binding domain maps to 90-150 (MRLDNVIFRL…NQRKSQAIIN (61 aa)).

This sequence belongs to the universal ribosomal protein uS4 family. Part of the 30S ribosomal subunit. Contacts protein S5. The interaction surface between S4 and S5 is involved in control of translational fidelity.

The protein resides in the plastid. It localises to the chloroplast. In terms of biological role, one of the primary rRNA binding proteins, it binds directly to 16S rRNA where it nucleates assembly of the body of the 30S subunit. Its function is as follows. With S5 and S12 plays an important role in translational accuracy. The sequence is that of Small ribosomal subunit protein uS4c (rps4) from Canalohypopterygium tamariscinum (Moss).